A 333-amino-acid chain; its full sequence is DNA-directed RNA polymerase subunit alpha (333 aa).

Residues 1-235 (MQTNLLKPKA…EQLAVFAQLE (235 aa)) form an alpha N-terminal domain (alpha-NTD) region. The segment at 253–333 (FDPILLRPVD…NWPPQGLDKR (81 aa)) is alpha C-terminal domain (alpha-CTD).

This sequence belongs to the RNA polymerase alpha chain family. In terms of assembly, homodimer. The RNAP catalytic core consists of 2 alpha, 1 beta, 1 beta' and 1 omega subunit. When a sigma factor is associated with the core the holoenzyme is formed, which can initiate transcription.

The catalysed reaction is RNA(n) + a ribonucleoside 5'-triphosphate = RNA(n+1) + diphosphate. DNA-dependent RNA polymerase catalyzes the transcription of DNA into RNA using the four ribonucleoside triphosphates as substrates. In Methylibium petroleiphilum (strain ATCC BAA-1232 / LMG 22953 / PM1), this protein is DNA-directed RNA polymerase subunit alpha.